The chain runs to 518 residues: MQYSIKQILNNANDKLNKIGINLPELEARILLQHVTNKPIEHLLIKLNEQLSEAEIEAFEKLLERRLEHEPIAYITGIKEFYSREFIVNKHVLIPRIDTEILIDVVIGLVVSRNDLNTCSKLKSLDSVKTIQHYNILELGTGSGCIAISLLCELPNTSVIATDISVDAIKVAKSNTIKHNVTDRIQIIHSNWFEKLNKQKFDLIVSNPPYISHSEKLEMAIETINYEPHIALFAEEDGLEAYSIIAKNAKQFLKPNGKIILEIGFSQAEKVCQIFLNYGYNIDHIYQDLQSHNRVIEISPINLNRSYARRIGKSLSKMQQKLLDNELPKYLFSKEKFASEKRKIFLEIGFGMGEHFINQAKINPDTLFIGVEVYLNGVANVLKHAAQHNIMNFLLFPNNLDLILNDLPNNSLDGIYILFPDPWIKNKKKKKRILNKERLNILQNKLKNNGNLVFASDIENYFYETITLIRQNGNFEIIHNDDYLKPHDNYIITKYHQKAINENRTAKFMILQHALTGH.

Residues Met1 to Pro300 are hemK. The RF MTase stretch occupies residues Met1–Asn302. S-adenosyl-L-methionine is bound by residues Gly140–Gly144, Asp163, Trp192, Asn207, Glu347, Glu372, Asn399, and Asp421. Asn207 to Tyr210 is a substrate binding site. The segment at Ile301–His518 is tRNA (guanine-N(7)-)-methyltransferase. Positions Arg305–His518 are tRNA MTase. Asp421 is an active-site residue. 2 residues coordinate substrate: Lys425 and Asp457.

The protein in the C-terminal section; belongs to the class I-like SAM-binding methyltransferase superfamily. TrmB family. In the N-terminal section; belongs to the protein N5-glutamine methyltransferase family. PrmC subfamily.

It catalyses the reaction L-glutaminyl-[peptide chain release factor] + S-adenosyl-L-methionine = N(5)-methyl-L-glutaminyl-[peptide chain release factor] + S-adenosyl-L-homocysteine + H(+). The enzyme catalyses guanosine(46) in tRNA + S-adenosyl-L-methionine = N(7)-methylguanosine(46) in tRNA + S-adenosyl-L-homocysteine. Methylates the class 1 translation termination release factors RF1/PrfA and RF2/PrfB on the glutamine residue of the universally conserved GGQ motif. Its function is as follows. Catalyzes the formation of N(7)-methylguanine at position 46 (m7G46) in tRNA. The protein is Bifunctional methyltransferase (prmC/trmB) of Rickettsia typhi (strain ATCC VR-144 / Wilmington).